The following is a 295-amino-acid chain: Elongation factor Ts (295 aa).

Positions 79 to 82 are involved in Mg(2+) ion dislocation from EF-Tu; the sequence is TDFV.

Belongs to the EF-Ts family.

It localises to the cytoplasm. In terms of biological role, associates with the EF-Tu.GDP complex and induces the exchange of GDP to GTP. It remains bound to the aminoacyl-tRNA.EF-Tu.GTP complex up to the GTP hydrolysis stage on the ribosome. This chain is Elongation factor Ts, found in Bacillus anthracis (strain A0248).